The chain runs to 393 residues: Flap endonuclease 1 (393 aa).

The interval 1–108 is N-domain; the sequence is MGILGLSKLL…SELQERRQRA (108 aa). Mg(2+) is bound at residue Asp-34. Residue Arg-74 coordinates DNA. Mg(2+) contacts are provided by Asp-90, Glu-162, Glu-164, Asp-183, and Asp-185. Residues 126-257 form an I-domain region; the sequence is LMEKMSKRTV…QKAWEGIKKH (132 aa). Position 162 (Glu-162) interacts with DNA. Gly-235 and Asp-237 together coordinate DNA. Asp-237 contacts Mg(2+). Positions 340-348 are interaction with PCNA; the sequence is TQGRLDQFF.

The protein belongs to the XPG/RAD2 endonuclease family. FEN1 subfamily. In terms of assembly, interacts with PCNA. Three molecules of FEN1 bind to one PCNA trimer with each molecule binding to one PCNA monomer. PCNA stimulates the nuclease activity without altering cleavage specificity. Requires Mg(2+) as cofactor. Phosphorylated. Phosphorylation upon DNA damage induces relocalization to the nuclear plasma.

The protein localises to the nucleus. The protein resides in the nucleolus. Its subcellular location is the nucleoplasm. It localises to the mitochondrion. In terms of biological role, structure-specific nuclease with 5'-flap endonuclease and 5'-3' exonuclease activities involved in DNA replication and repair. During DNA replication, cleaves the 5'-overhanging flap structure that is generated by displacement synthesis when DNA polymerase encounters the 5'-end of a downstream Okazaki fragment. It enters the flap from the 5'-end and then tracks to cleave the flap base, leaving a nick for ligation. Also involved in the long patch base excision repair (LP-BER) pathway, by cleaving within the apurinic/apyrimidinic (AP) site-terminated flap. Acts as a genome stabilization factor that prevents flaps from equilibrating into structures that lead to duplications and deletions. Also possesses 5'-3' exonuclease activity on nicked or gapped double-stranded DNA, and exhibits RNase H activity. Also involved in replication and repair of rDNA and in repairing mitochondrial DNA. The sequence is that of Flap endonuclease 1 from Trypanosoma cruzi (strain CL Brener).